Here is a 153-residue protein sequence, read N- to C-terminus: Aspartate carbamoyltransferase regulatory chain (153 aa).

C109, C114, C138, and C141 together coordinate Zn(2+).

The protein belongs to the PyrI family. Contains catalytic and regulatory chains. Zn(2+) is required as a cofactor.

In terms of biological role, involved in allosteric regulation of aspartate carbamoyltransferase. This is Aspartate carbamoyltransferase regulatory chain from Klebsiella pneumoniae subsp. pneumoniae (strain ATCC 700721 / MGH 78578).